We begin with the raw amino-acid sequence, 339 residues long: Ketol-acid reductoisomerase (NADP(+)) (339 aa).

In terms of domain architecture, KARI N-terminal Rossmann spans methionine 1 to threonine 182. NADP(+)-binding positions include tyrosine 24–glutamine 27, lysine 48, serine 51, threonine 53, and aspartate 83–glutamine 86. Histidine 108 is an active-site residue. NADP(+) is bound at residue glycine 134. The KARI C-terminal knotted domain maps to threonine 183–isoleucine 328. Mg(2+) contacts are provided by aspartate 191, glutamate 195, glutamate 227, and glutamate 231. Position 252 (serine 252) interacts with substrate.

This sequence belongs to the ketol-acid reductoisomerase family. Mg(2+) serves as cofactor.

The catalysed reaction is (2R)-2,3-dihydroxy-3-methylbutanoate + NADP(+) = (2S)-2-acetolactate + NADPH + H(+). The enzyme catalyses (2R,3R)-2,3-dihydroxy-3-methylpentanoate + NADP(+) = (S)-2-ethyl-2-hydroxy-3-oxobutanoate + NADPH + H(+). It participates in amino-acid biosynthesis; L-isoleucine biosynthesis; L-isoleucine from 2-oxobutanoate: step 2/4. The protein operates within amino-acid biosynthesis; L-valine biosynthesis; L-valine from pyruvate: step 2/4. Involved in the biosynthesis of branched-chain amino acids (BCAA). Catalyzes an alkyl-migration followed by a ketol-acid reduction of (S)-2-acetolactate (S2AL) to yield (R)-2,3-dihydroxy-isovalerate. In the isomerase reaction, S2AL is rearranged via a Mg-dependent methyl migration to produce 3-hydroxy-3-methyl-2-ketobutyrate (HMKB). In the reductase reaction, this 2-ketoacid undergoes a metal-dependent reduction by NADPH to yield (R)-2,3-dihydroxy-isovalerate. This Allorhizobium ampelinum (strain ATCC BAA-846 / DSM 112012 / S4) (Agrobacterium vitis (strain S4)) protein is Ketol-acid reductoisomerase (NADP(+)).